A 343-amino-acid chain; its full sequence is S-adenosylmethionine:tRNA ribosyltransferase-isomerase (343 aa).

It belongs to the QueA family. As to quaternary structure, monomer.

It localises to the cytoplasm. It carries out the reaction 7-aminomethyl-7-carbaguanosine(34) in tRNA + S-adenosyl-L-methionine = epoxyqueuosine(34) in tRNA + adenine + L-methionine + 2 H(+). Its pathway is tRNA modification; tRNA-queuosine biosynthesis. Functionally, transfers and isomerizes the ribose moiety from AdoMet to the 7-aminomethyl group of 7-deazaguanine (preQ1-tRNA) to give epoxyqueuosine (oQ-tRNA). The chain is S-adenosylmethionine:tRNA ribosyltransferase-isomerase from Coxiella burnetii (strain RSA 331 / Henzerling II).